The primary structure comprises 417 residues: 3-isopropylmalate dehydratase large subunit (417 aa).

C298, C358, and C361 together coordinate [4Fe-4S] cluster.

It belongs to the aconitase/IPM isomerase family. LeuC type 2 subfamily. As to quaternary structure, heterodimer of LeuC and LeuD. [4Fe-4S] cluster serves as cofactor.

It carries out the reaction (2R,3S)-3-isopropylmalate = (2S)-2-isopropylmalate. It functions in the pathway amino-acid biosynthesis; L-leucine biosynthesis; L-leucine from 3-methyl-2-oxobutanoate: step 2/4. Catalyzes the isomerization between 2-isopropylmalate and 3-isopropylmalate, via the formation of 2-isopropylmaleate. The chain is 3-isopropylmalate dehydratase large subunit from Thermoanaerobacter pseudethanolicus (strain ATCC 33223 / 39E) (Clostridium thermohydrosulfuricum).